A 367-amino-acid polypeptide reads, in one-letter code: Multifunctional tryptophan biosynthesis protein (367 aa).

In terms of domain architecture, Glutamine amidotransferase type-1 spans 7 to 201; that stretch reads NVVMIDNYDS…LNVSGGYWEE (195 aa). An L-glutamine-binding site is contributed by 58–60; sequence GPG. The Nucleophile; for GATase activity role is filled by cysteine 86. L-glutamine contacts are provided by residues glutamine 90 and 136–137; that span reads SL. Residues histidine 175 and glutamate 177 each act as for GATase activity in the active site. The interval 209-367 is indole-3-glycerol phosphate synthase; it reads RKESILEKIY…TVLLIVKMLS (159 aa).

As to quaternary structure, tetramer of two components I and two components II.

The enzyme catalyses chorismate + L-glutamine = anthranilate + pyruvate + L-glutamate + H(+). It carries out the reaction 1-(2-carboxyphenylamino)-1-deoxy-D-ribulose 5-phosphate + H(+) = (1S,2R)-1-C-(indol-3-yl)glycerol 3-phosphate + CO2 + H2O. It participates in amino-acid biosynthesis; L-tryptophan biosynthesis; L-tryptophan from chorismate: step 1/5. Its pathway is amino-acid biosynthesis; L-tryptophan biosynthesis; L-tryptophan from chorismate: step 4/5. The protein is Multifunctional tryptophan biosynthesis protein of Pichia angusta (Yeast).